We begin with the raw amino-acid sequence, 340 residues long: TATA-box-binding protein (340 aa).

A disordered region spans residues 1 to 78 (MNLNSPAVSM…HSLQGSSMQM (78 aa)). The segment covering 57-68 (PQSIQPMQSQQM) has biased composition (low complexity). The span at 69–78 (HSLQGSSMQM) shows a compositional bias: polar residues. Tandem repeats lie at residues 168-244 (LQNI…ARIV) and 258-335 (VQNM…YPIL).

This sequence belongs to the TBP family. In terms of assembly, component of the TFIID basal transcription factor complex, composed of TATA-box-binding protein tbp-1, and a number of TBP-associated factors (TAFs). Binds DNA as monomer.

It is found in the nucleus. Functionally, the TFIID basal transcription factor complex plays a major role in the initiation of RNA polymerase II (Pol II)-dependent transcription. TFIID recognizes and binds promoters via its subunit tbp-1, a TATA-box-binding protein, and promotes assembly of the pre-initiation complex (PIC). The TFIID complex consists of tbp-1 and TBP-associated factors (TAFs). General transcription factor that functions at the core of the TFIID complex. The chain is TATA-box-binding protein (tbp-1) from Caenorhabditis elegans.